The sequence spans 372 residues: tRNA-specific 2-thiouridylase MnmA (372 aa).

ATP-binding positions include 16-23 (GMSGGVDS) and M42. Residues 102–104 (NPD) form an interaction with target base in tRNA region. The Nucleophile role is filled by C107. A disulfide bridge links C107 with C205. Residue G132 participates in ATP binding. Residues 155–157 (KDQ) are interaction with tRNA. The active-site Cysteine persulfide intermediate is the C205. The interval 317-318 (RY) is interaction with tRNA.

Belongs to the MnmA/TRMU family.

The protein resides in the cytoplasm. The enzyme catalyses S-sulfanyl-L-cysteinyl-[protein] + uridine(34) in tRNA + AH2 + ATP = 2-thiouridine(34) in tRNA + L-cysteinyl-[protein] + A + AMP + diphosphate + H(+). Its function is as follows. Catalyzes the 2-thiolation of uridine at the wobble position (U34) of tRNA, leading to the formation of s(2)U34. The chain is tRNA-specific 2-thiouridylase MnmA from Shewanella baltica (strain OS195).